Consider the following 472-residue polypeptide: Clampless protein 1 (472 aa).

Residues Asn70 and Asn296 are each glycosylated (N-linked (GlcNAc...) asparagine).

Its function is as follows. Required for developmental progression after cells of opposite mating types fuse with one another, essential for processes common to both dikaryotic filament formation and monokaryotic fruiting. A direct target for transcription factors Sxi1-alpha and Sxi2-a. The protein is Clampless protein 1 of Cryptococcus neoformans var. neoformans serotype D (strain B-3501A) (Filobasidiella neoformans).